The sequence spans 784 residues: Kinesin-like protein 6 (784 aa).

The 384-residue stretch at 6–389 folds into the Kinesin motor domain; that stretch reads SISVAVRVRP…LKYGNRAKNI (384 aa). 134-141 lines the ATP pocket; the sequence is GATGCGKT. Coiled coils occupy residues 405-440 and 463-483; these read SEYV…EVRK and RDLQ…EDEI. Positions 677–715 are disordered; it reads SEVPTTSSVPPVEIKNKDSKPKVEKSLDKHNMNNDRSFL. Positions 690-709 are enriched in basic and acidic residues; the sequence is IKNKDSKPKVEKSLDKHNMN.

The protein belongs to the TRAFAC class myosin-kinesin ATPase superfamily. Kinesin family. Kinesin II subfamily. Heterodimer with klp5.

It localises to the cytoplasm. It is found in the cytoskeleton. Its subcellular location is the chromosome. The protein localises to the centromere. The protein resides in the kinetochore. It localises to the spindle. In terms of biological role, has a role in establishing metaphase during mitosis. Required for chromosome segregation where it generates tension during kinetochore capturing. In Schizosaccharomyces pombe (strain 972 / ATCC 24843) (Fission yeast), this protein is Kinesin-like protein 6 (klp6).